The following is a 119-amino-acid chain: Holo-[acyl-carrier-protein] synthase (119 aa).

Positions 7 and 53 each coordinate Mg(2+).

Belongs to the P-Pant transferase superfamily. AcpS family. Mg(2+) is required as a cofactor.

It is found in the cytoplasm. The catalysed reaction is apo-[ACP] + CoA = holo-[ACP] + adenosine 3',5'-bisphosphate + H(+). Transfers the 4'-phosphopantetheine moiety from coenzyme A to a Ser of acyl-carrier-protein. The polypeptide is Holo-[acyl-carrier-protein] synthase (Dehalococcoides mccartyi (strain CBDB1)).